Consider the following 538-residue polypeptide: Putative cysteine ligase BshC (538 aa).

Residues 248–268 are a coiled coil; it reads ISKYKEVQEGLRNQQEVIKEL.

This sequence belongs to the BshC family.

Its function is as follows. Involved in bacillithiol (BSH) biosynthesis. May catalyze the last step of the pathway, the addition of cysteine to glucosamine malate (GlcN-Mal) to generate BSH. This is Putative cysteine ligase BshC from Bacillus cereus (strain G9842).